The following is a 622-amino-acid chain: Pyranose 2-oxidase (622 aa).

A signal peptide spans Met-1–His-28. Positions Ser-29–Gly-37 are excised as a propeptide. Residue His-167 is modified to Tele-8alpha-FAD histidine. Substrate contacts are provided by Gln-449 and His-451. His-546 (proton acceptor) is an active-site residue. Asn-591 is an active-site residue.

Belongs to the GMC oxidoreductase family. As to quaternary structure, homotetramer. FAD serves as cofactor.

The protein resides in the periplasm. The catalysed reaction is D-glucose + O2 = 2-dehydro-D-glucose + H2O2. In terms of biological role, catalyzes the oxidation of various aldopyranoses and disaccharides on carbon-2 to the corresponding 2-keto sugars concomitant with the reduction of O(2) to H(2)O(2). Plays an important role in lignin degradation of wood rot fungi by supplying the essential cosubstrate H(2)O(2) for the ligninolytic peroxidases, lignin peroxidase and manganese-dependent peroxidase. The preferred substrate is D-glucose which is converted to 2-dehydro-D-glucose, an intermediate of a secondary metabolic pathway leading to the antibiotic cortalcerone. Also acts on D-xylose, together with D-glucose the major sugars derived from wood, on L-sorbose, D-galactose and 1,5-anhydroglucitol, a diagnostic marker of diabetes mellitus. The sequence is that of Pyranose 2-oxidase (P2OX) from Trametes hirsuta (White-rot fungus).